The sequence spans 451 residues: Lipase member H (451 aa).

A signal peptide spans 1–16 (MLRLCFFISFMCLVKS). An N-linked (GlcNAc...) asparagine glycan is attached at N66. Residue S154 is the Nucleophile of the active site. Catalysis depends on D178, which acts as the Charge relay system. C233 and C246 are disulfide-bonded. H248 acts as the Charge relay system in catalysis. 3 cysteine pairs are disulfide-bonded: C270-C281, C284-C292, and C427-C446.

Belongs to the AB hydrolase superfamily. Lipase family. In terms of assembly, interacts with TTMP/C3orf52. As to expression, expressed in placenta and colon. Weakly expressed in small intestine.

The protein localises to the secreted. The protein resides in the cell membrane. It carries out the reaction 1-hexadecanoyl-2-(9Z-octadecenoyl)-sn-glycero-3-phosphate + H2O = 2-(9Z-octadecenoyl)-sn-glycero-3-phosphate + hexadecanoate + H(+). Functionally, hydrolyzes specifically phosphatidic acid (PA) to produce 2-acyl lysophosphatidic acid (LPA; a potent bioactive lipid mediator) and fatty acid. Does not hydrolyze other phospholipids, like phosphatidylserine (PS), phosphatidylcholine (PC) and phosphatidylethanolamine (PE) or triacylglycerol (TG). The polypeptide is Lipase member H (Liph) (Mus musculus (Mouse)).